The sequence spans 243 residues: Protein DMP8 (243 aa).

The disordered stretch occupies residues 1-37; that stretch reads MEKTEESVGIRVYTTTTTQNPSPTSSRSPKPVPLSSL. The segment covering 14-29 has biased composition (low complexity); that stretch reads TTTTTQNPSPTSSRSP. The next 4 membrane-spanning stretches (helical) occupy residues 70 to 90, 98 to 118, 174 to 194, and 212 to 232; these read MLVN…LPTI, GINT…CFFF, VNDF…AFSD, and VMES…LVFP.

This sequence belongs to the plant DMP1 protein family. As to expression, restricted to flowers.

It is found in the endoplasmic reticulum membrane. The protein resides in the vacuole membrane. Functionally, involved in membrane remodeling. This Arabidopsis thaliana (Mouse-ear cress) protein is Protein DMP8.